The chain runs to 504 residues: Glucose-6-phosphate isomerase (504 aa).

E333 (proton donor) is an active-site residue. Catalysis depends on residues H364 and K473.

It belongs to the GPI family.

The protein localises to the cytoplasm. It catalyses the reaction alpha-D-glucose 6-phosphate = beta-D-fructose 6-phosphate. Its pathway is carbohydrate biosynthesis; gluconeogenesis. It participates in carbohydrate degradation; glycolysis; D-glyceraldehyde 3-phosphate and glycerone phosphate from D-glucose: step 2/4. Functionally, catalyzes the reversible isomerization of glucose-6-phosphate to fructose-6-phosphate. The polypeptide is Glucose-6-phosphate isomerase (Xanthomonas axonopodis pv. citri (strain 306)).